A 156-amino-acid polypeptide reads, in one-letter code: Snaclec A14 (156 aa).

An N-terminal signal peptide occupies residues 1-23 (MGRFIFVRVGLLVVFLSLSGTGA). 3 cysteine pairs are disulfide-bonded: cysteine 27-cysteine 38, cysteine 55-cysteine 152, and cysteine 127-cysteine 144. Residues 34-153 (YDQHCYKAFD…CGDDYPFVCK (120 aa)) enclose the C-type lectin domain. N-linked (GlcNAc...) asparagine glycosylation occurs at asparagine 141.

This sequence belongs to the snaclec family. As to quaternary structure, heterodimer; disulfide-linked. In terms of tissue distribution, expressed by the venom gland.

It is found in the secreted. In terms of biological role, interferes with one step of hemostasis (modulation of platelet aggregation, or coagulation cascade, for example). The chain is Snaclec A14 from Macrovipera lebetinus (Levantine viper).